A 292-amino-acid polypeptide reads, in one-letter code: ATP phosphoribosyltransferase (292 aa).

This sequence belongs to the ATP phosphoribosyltransferase family. Long subfamily. The cofactor is Mg(2+).

The protein localises to the cytoplasm. The catalysed reaction is 1-(5-phospho-beta-D-ribosyl)-ATP + diphosphate = 5-phospho-alpha-D-ribose 1-diphosphate + ATP. Its pathway is amino-acid biosynthesis; L-histidine biosynthesis; L-histidine from 5-phospho-alpha-D-ribose 1-diphosphate: step 1/9. Feedback inhibited by histidine. Functionally, catalyzes the condensation of ATP and 5-phosphoribose 1-diphosphate to form N'-(5'-phosphoribosyl)-ATP (PR-ATP). Has a crucial role in the pathway because the rate of histidine biosynthesis seems to be controlled primarily by regulation of HisG enzymatic activity. The protein is ATP phosphoribosyltransferase of Gemmatimonas aurantiaca (strain DSM 14586 / JCM 11422 / NBRC 100505 / T-27).